A 734-amino-acid polypeptide reads, in one-letter code: Sulfate transporter (734 aa).

Over residues 1–18 (MSLKNEDQNDLSPKDSVK) the composition is skewed to basic and acidic residues. Positions 1–38 (MSLKNEDQNDLSPKDSVKGNDQYRAPSGIHLEPEEESR) are disordered. Residues serine 12 and serine 16 each carry the phosphoserine modification. 2 helical membrane passes run 113 to 133 (VMSG…YSLL) and 138 to 158 (PIYG…LGTS). N-linked (GlcNAc...) asparagine glycosylation occurs at asparagine 194. The next 6 membrane-spanning stretches (helical) occupy residues 214 to 234 (IIVG…MGFF), 237 to 257 (GFVS…GASF), 379 to 399 (VDAI…SEMF), 415 to 435 (AIGF…SAAL), 453 to 473 (VMTA…FFSL), and 519 to 539 (LIST…CVIL). In terms of domain architecture, STAS spans 563–714 (AYKNLQAKSG…YSIYEAMTFA (152 aa)).

Belongs to the SLC26A/SulP transporter (TC 2.A.53) family. In terms of processing, N-glycosylated.

The protein localises to the cell membrane. The protein resides in the apical cell membrane. The catalysed reaction is oxalate(in) + sulfate(out) = oxalate(out) + sulfate(in). It catalyses the reaction sulfate(out) + 2 chloride(in) = sulfate(in) + 2 chloride(out). The enzyme catalyses oxalate(out) + 2 chloride(in) = oxalate(in) + 2 chloride(out). It carries out the reaction bromide(in) + chloride(out) = bromide(out) + chloride(in). The catalysed reaction is nitrate(in) + chloride(out) = nitrate(out) + chloride(in). It catalyses the reaction iodide(in) + chloride(out) = iodide(out) + chloride(in). In terms of biological role, sulfate transporter which mediates sulfate uptake into chondrocytes in order to maintain adequate sulfation of proteoglycans which is needed for cartilage development. Mediates electroneutral anion exchange of sulfate ions for oxalate ions, sulfate and oxalate ions for chloride and/or hydroxyl ions and chloride ions for bromide, iodide and nitrate ions. The coupling of sulfate transport to both hydroxyl and chloride ions likely serves to ensure transport at both acidic pH when most sulfate uptake is mediated by sulfate-hydroxide exchange and alkaline pH when most sulfate uptake is mediated by sulfate-chloride exchange. Essential for chondrocyte proliferation, differentiation and cell size expansion. The sequence is that of Sulfate transporter (SLC26A2) from Bos taurus (Bovine).